A 500-amino-acid chain; its full sequence is Glycerol kinase (500 aa).

Position 12 (threonine 12) interacts with ADP. The ATP site is built by threonine 12, threonine 13, and serine 14. Threonine 12 is a binding site for sn-glycerol 3-phosphate. ADP is bound at residue arginine 16. Sn-glycerol 3-phosphate contacts are provided by arginine 82, glutamate 83, tyrosine 134, and aspartate 243. Positions 82, 83, 134, 243, and 244 each coordinate glycerol. Residues threonine 265 and glycine 308 each coordinate ADP. Threonine 265, glycine 308, glutamine 312, and glycine 411 together coordinate ATP. Glycine 411 contributes to the ADP binding site.

This sequence belongs to the FGGY kinase family.

It catalyses the reaction glycerol + ATP = sn-glycerol 3-phosphate + ADP + H(+). Its pathway is polyol metabolism; glycerol degradation via glycerol kinase pathway; sn-glycerol 3-phosphate from glycerol: step 1/1. With respect to regulation, inhibited by fructose 1,6-bisphosphate (FBP). Key enzyme in the regulation of glycerol uptake and metabolism. Catalyzes the phosphorylation of glycerol to yield sn-glycerol 3-phosphate. This is Glycerol kinase from Chelativorans sp. (strain BNC1).